The chain runs to 175 residues: 3-hydroxyanthranilate 3,4-dioxygenase (175 aa).

Residue arginine 45 participates in O2 binding. Positions 49, 55, and 93 each coordinate Fe cation. Residue glutamate 55 coordinates substrate. 2 residues coordinate substrate: arginine 97 and glutamate 107. Cysteine 122, cysteine 125, cysteine 159, and cysteine 162 together coordinate a divalent metal cation.

This sequence belongs to the 3-HAO family. It depends on Fe(2+) as a cofactor.

The protein resides in the cytoplasm. The enzyme catalyses 3-hydroxyanthranilate + O2 = (2Z,4Z)-2-amino-3-carboxymuconate 6-semialdehyde. It participates in cofactor biosynthesis; NAD(+) biosynthesis; quinolinate from L-kynurenine: step 3/3. In terms of biological role, catalyzes the oxidative ring opening of 3-hydroxyanthranilate to 2-amino-3-carboxymuconate semialdehyde, which spontaneously cyclizes to quinolinate. The chain is 3-hydroxyanthranilate 3,4-dioxygenase from Lodderomyces elongisporus (strain ATCC 11503 / CBS 2605 / JCM 1781 / NBRC 1676 / NRRL YB-4239) (Yeast).